The sequence spans 309 residues: Minor serine/threonine-protein phosphatase PP2A-1 catalytic subunit (309 aa).

Mn(2+) is bound by residues Asp57, His59, Asp85, and Asn117. His118 acts as the Proton donor in catalysis. Mn(2+)-binding residues include His167 and His241. At Leu309 the chain carries Leucine methyl ester.

It belongs to the PPP phosphatase family. PP-2A subfamily. The cofactor is Mn(2+).

It carries out the reaction O-phospho-L-seryl-[protein] + H2O = L-seryl-[protein] + phosphate. The catalysed reaction is O-phospho-L-threonyl-[protein] + H2O = L-threonyl-[protein] + phosphate. Its function is as follows. Essential role in cell cycle control. PP2A may be involved in controlling the entry into mitosis, possibly acting as an inhibitor. The polypeptide is Minor serine/threonine-protein phosphatase PP2A-1 catalytic subunit (ppa1) (Schizosaccharomyces pombe (strain 972 / ATCC 24843) (Fission yeast)).